We begin with the raw amino-acid sequence, 417 residues long: RH-like protein IIF (417 aa).

Transmembrane regions (helical) follow at residues 12–32 (CLPL…YFFT), 44–64 (LVAS…GFGF), 77–97 (VAFN…LDGF), 125–145 (ISAG…MVLV), 172–192 (FYLF…KPLP), 203–223 (TIPS…WPSF), 238–258 (VFNT…GSSL), 265–285 (ISMT…GTSC), 287–307 (LIPS…ISIG), 331–351 (NFSL…VRHT), and 358–378 (MIGF…AIAL).

Belongs to the ammonium transporter (TC 2.A.49) family. Rh subfamily.

The protein resides in the membrane. May be part of an oligomeric complex which is likely to have a transport or channel function in the erythrocyte membrane. The protein is RH-like protein IIF of Pan troglodytes (Chimpanzee).